The sequence spans 68 residues: Copper transport protein ATOX1 (68 aa).

Positions 1 to 63 (MPKHEFSVDM…TLEKTGKAVS (63 aa)) constitute an HMA domain. Residues Cys12 and Cys15 each coordinate Cu cation. The residue at position 47 (Ser47) is a Phosphoserine. Residue Lys60 is modified to N6-acetyllysine.

Belongs to the ATX1 family. Homodimer. Interacts with ATP7B. Interacts with ATP7A. Interacts (via dimer form) with SLC31A1 (via C-terminal domain); this interaction improves ATOX1 stability and controls intracellular Cu(I) levels.

Its function is as follows. Binds and deliver cytosolic copper to the copper ATPase proteins. May be important in cellular antioxidant defense. This Canis lupus familiaris (Dog) protein is Copper transport protein ATOX1.